The sequence spans 177 residues: Small ribosomal subunit protein uS5 (177 aa).

The S5 DRBM domain occupies 21–84; it reads LKEKMVSVNR…DEARQRMVRV (64 aa).

The protein belongs to the universal ribosomal protein uS5 family. In terms of assembly, part of the 30S ribosomal subunit. Contacts proteins S4 and S8.

In terms of biological role, with S4 and S12 plays an important role in translational accuracy. Located at the back of the 30S subunit body where it stabilizes the conformation of the head with respect to the body. This chain is Small ribosomal subunit protein uS5, found in Nitrosomonas europaea (strain ATCC 19718 / CIP 103999 / KCTC 2705 / NBRC 14298).